A 191-amino-acid chain; its full sequence is uncharacterized protein (191 aa).

Helical transmembrane passes span 24–44, 51–71, 114–134, 139–159, and 167–187; these read IVRG…GASG, IIAA…LGAF, LIDG…FFLF, ALYV…VFIG, and IISG…CFMI.

It localises to the cell membrane. This is an uncharacterized protein from Methanocaldococcus jannaschii (strain ATCC 43067 / DSM 2661 / JAL-1 / JCM 10045 / NBRC 100440) (Methanococcus jannaschii).